A 207-amino-acid chain; its full sequence is dTTP/UTP pyrophosphatase (207 aa).

Catalysis depends on D87, which acts as the Proton acceptor.

The protein belongs to the Maf family. YhdE subfamily. A divalent metal cation is required as a cofactor.

The protein localises to the cytoplasm. It catalyses the reaction dTTP + H2O = dTMP + diphosphate + H(+). The enzyme catalyses UTP + H2O = UMP + diphosphate + H(+). Functionally, nucleoside triphosphate pyrophosphatase that hydrolyzes dTTP and UTP. May have a dual role in cell division arrest and in preventing the incorporation of modified nucleotides into cellular nucleic acids. The polypeptide is dTTP/UTP pyrophosphatase (Ralstonia nicotianae (strain ATCC BAA-1114 / GMI1000) (Ralstonia solanacearum)).